The primary structure comprises 85 residues: U4-theraphotoxin-Hhn1a (85 aa).

The first 22 residues, 1–22 (MKVTLIAILTCAAVLVLHTTAA), serve as a signal peptide directing secretion. Positions 23–48 (EELEAESQLMEVGMPDTELAAVDEER) are excised as a propeptide. Disulfide bonds link Cys-52–Cys-66, Cys-56–Cys-77, and Cys-71–Cys-82.

Belongs to the neurotoxin 12 (Hwtx-2) family. 02 (Hwtx-2) subfamily. Monomer. As to expression, expressed by the venom gland.

The protein resides in the secreted. Neurotoxin active on both insects and mammals. The chain is U4-theraphotoxin-Hhn1a from Cyriopagopus hainanus (Chinese bird spider).